A 645-amino-acid polypeptide reads, in one-letter code: Zinc finger protein 64 (645 aa).

C2H2-type zinc fingers lie at residues H175–H197, Y203–H225, and F231–H253. E286 participates in a covalent cross-link: Glycyl lysine isopeptide (Lys-Gly) (interchain with G-Cter in SUMO2). The C2H2-type 4; atypical zinc finger occupies F299–H324. 9 consecutive C2H2-type zinc fingers follow at residues H330–H352, H358–H380, Y386–H408, F414–H436, F442–H465, F467–H489, E495–H517, F523–H546, and F580–H602. N397 is covalently cross-linked (Glycyl lysine isopeptide (Lys-Gly) (interchain with G-Cter in SUMO2)). 2 stretches are compositionally biased toward basic and acidic residues: residues D543–N554 and K600–N610. 2 disordered regions span residues D543–S567 and K600–L645. V545 is modified (phosphoserine). A compositionally biased stretch (polar residues) spans A622–S631.

This sequence belongs to the krueppel C2H2-type zinc-finger protein family. As to quaternary structure, interacts with ZNF70; this interaction promote the transactivation of the HES1 gene. Interacts with NOTCH1.

It is found in the nucleus. Functionally, may be involved in the regulation of mesenchymal cell differentiation through transactivation of NOTCH1 target genes. The chain is Zinc finger protein 64 from Homo sapiens (Human).